Reading from the N-terminus, the 111-residue chain is Large ribosomal subunit protein uL29 (111 aa).

The large ribosomal subunit protein uL29 stretch occupies residues Met-1–Asn-85. The interval Ala-86 to Lys-111 is unknown.

Belongs to the universal ribosomal protein uL29 family.

This chain is Large ribosomal subunit protein uL29, found in Mycoplasma pneumoniae (strain ATCC 29342 / M129 / Subtype 1) (Mycoplasmoides pneumoniae).